A 509-amino-acid polypeptide reads, in one-letter code: DEAD-box ATP-dependent RNA helicase CshA (509 aa).

The Q motif motif lies at 2–30; sequence QNFKELGISDKTVQTLEAMGFKEPTPIQK. A Helicase ATP-binding domain is found at 33–203; the sequence is IPYALEGDDI…QQFMKAPKII (171 aa). An ATP-binding site is contributed by 46–53; the sequence is AQTGTGKT. Residues 150–153 carry the DEAD box motif; the sequence is DEAD. One can recognise a Helicase C-terminal domain in the interval 214 to 375; that stretch reads QIDEYYTIVK…LRPPHRKEVL (162 aa). Basic residues-rich tracts occupy residues 440–459 and 467–482; these read ARKN…KRGN and RRSK…KKNQ. A disordered region spans residues 440 to 509; the sequence is ARKNRSSKGG…KGRTFADHQK (70 aa). The span at 483-492 shows a compositional bias: basic and acidic residues; the sequence is KKFDRRDKQQ.

The protein belongs to the DEAD box helicase family. CshA subfamily. As to quaternary structure, oligomerizes, may be a member of the RNA degradosome.

The protein localises to the cytoplasm. The enzyme catalyses ATP + H2O = ADP + phosphate + H(+). Functionally, DEAD-box RNA helicase possibly involved in RNA degradation. Unwinds dsRNA in both 5'- and 3'-directions, has RNA-dependent ATPase activity. In Staphylococcus epidermidis (strain ATCC 35984 / DSM 28319 / BCRC 17069 / CCUG 31568 / BM 3577 / RP62A), this protein is DEAD-box ATP-dependent RNA helicase CshA.